Consider the following 196-residue polypeptide: dTTP/UTP pyrophosphatase (196 aa).

Asp76 (proton acceptor) is an active-site residue.

Belongs to the Maf family. YhdE subfamily. It depends on a divalent metal cation as a cofactor.

The protein localises to the cytoplasm. The catalysed reaction is dTTP + H2O = dTMP + diphosphate + H(+). The enzyme catalyses UTP + H2O = UMP + diphosphate + H(+). In terms of biological role, nucleoside triphosphate pyrophosphatase that hydrolyzes dTTP and UTP. May have a dual role in cell division arrest and in preventing the incorporation of modified nucleotides into cellular nucleic acids. In Chlorobium chlorochromatii (strain CaD3), this protein is dTTP/UTP pyrophosphatase.